Here is an 801-residue protein sequence, read N- to C-terminus: Ent-copalyl diphosphate synthase, chloroplastic (801 aa).

Lys-241 contributes to the substrate binding site. Asp-373 and Asp-375 together coordinate Mg(2+). The DXDD motif signature appears at 373–376 (DIDD). Lys-459 lines the substrate pocket.

It belongs to the terpene synthase family. Mg(2+) is required as a cofactor.

It is found in the plastid. It localises to the chloroplast. It catalyses the reaction (2E,6E,10E)-geranylgeranyl diphosphate = ent-copalyl diphosphate. The protein operates within plant hormone biosynthesis; gibberellin biosynthesis. Its function is as follows. Catalyzes the conversion of geranylgeranyl diphosphate to the gibberellin precursor ent-copalyl diphosphate. The polypeptide is Ent-copalyl diphosphate synthase, chloroplastic (Pisum sativum (Garden pea)).